A 351-amino-acid polypeptide reads, in one-letter code: Adenine deaminase (351 aa).

The Zn(2+) site is built by His20, His22, and His200. The active-site Proton donor is Glu203. Asp281 serves as a coordination point for Zn(2+). Position 282 (Asp282) interacts with substrate.

The protein belongs to the metallo-dependent hydrolases superfamily. Adenosine and AMP deaminases family. Adenine deaminase type 2 subfamily. The cofactor is Zn(2+).

It carries out the reaction adenine + H2O + H(+) = hypoxanthine + NH4(+). Catalyzes the hydrolytic deamination of adenine to hypoxanthine. Plays an important role in the purine salvage pathway and in nitrogen catabolism. The polypeptide is Adenine deaminase (Cupriavidus taiwanensis (strain DSM 17343 / BCRC 17206 / CCUG 44338 / CIP 107171 / LMG 19424 / R1) (Ralstonia taiwanensis (strain LMG 19424))).